Reading from the N-terminus, the 765-residue chain is Putative ankyrin repeat protein L371 (765 aa).

ANK repeat units lie at residues 60–89 (NGNY…RLDV), 93–122 (EGNS…KIIG), 132–161 (KGSV…NANY), 165–194 (DNVN…NLNA), 198–227 (QGST…DQNI), 232–261 (LDFY…NPNH), 265–295 (EGNT…RCRS), 322–353 (DGLT…NLNY), and 357–395 (TGNT…GKTV).

This Acanthamoeba polyphaga mimivirus (APMV) protein is Putative ankyrin repeat protein L371.